We begin with the raw amino-acid sequence, 510 residues long: 2,3-bisphosphoglycerate-independent phosphoglycerate mutase (510 aa).

Residues Asp-14 and Ser-64 each contribute to the Mn(2+) site. The active-site Phosphoserine intermediate is the Ser-64. Substrate is bound by residues His-125, 155-156 (RD), Arg-187, Arg-193, 259-262 (RADR), and Lys-332. Residues Asp-399, His-403, Asp-440, His-441, and His-459 each coordinate Mn(2+).

This sequence belongs to the BPG-independent phosphoglycerate mutase family. In terms of assembly, monomer. It depends on Mn(2+) as a cofactor.

The enzyme catalyses (2R)-2-phosphoglycerate = (2R)-3-phosphoglycerate. It functions in the pathway carbohydrate degradation; glycolysis; pyruvate from D-glyceraldehyde 3-phosphate: step 3/5. Catalyzes the interconversion of 2-phosphoglycerate and 3-phosphoglycerate. This Pseudomonas syringae pv. syringae (strain B728a) protein is 2,3-bisphosphoglycerate-independent phosphoglycerate mutase.